A 291-amino-acid chain; its full sequence is Probable prolyl 4-hydroxylase 12 (291 aa).

The Cytoplasmic portion of the chain corresponds to 1–156 (MACLSRIFLI…GEEPSSVLHE (156 aa)). One can recognise a Fe2OG dioxygenase domain in the interval 125 to 239 (NGGSIKVRSY…LLVATKLIYA (115 aa)). The Fe cation site is built by Lys142 and Asp144. The chain crosses the membrane as a helical; Signal-anchor for type II membrane protein span at residues 157 to 173 (SLLATVVLYLSNTTQGG). Residues 174 to 291 (ELLFPNSEMK…GTCRKSCNAC (118 aa)) are Lumenal-facing. Asn211 carries an N-linked (GlcNAc...) asparagine glycan. His220 contributes to the Fe cation binding site. The 41-residue stretch at 251-291 (CSDEDENCGRWAKLGECKKNPVYMIGSPDYYGTCRKSCNAC) folds into the ShKT domain. 3 cysteine pairs are disulfide-bonded: Cys251/Cys291, Cys258/Cys284, and Cys267/Cys288.

It belongs to the P4HA family. It depends on Fe(2+) as a cofactor. The cofactor is L-ascorbate.

It localises to the endoplasmic reticulum membrane. It carries out the reaction L-prolyl-[collagen] + 2-oxoglutarate + O2 = trans-4-hydroxy-L-prolyl-[collagen] + succinate + CO2. Its function is as follows. Catalyzes the post-translational formation of 4-hydroxyproline in -Xaa-Pro-Gly- sequences in proline-rich peptide sequences of plant glycoproteins and other proteins. Hydroxyprolines are important constituent of many plant cell wall glycoproteins such as extensins, hydroxyproline-rich glycoproteins, lectins and arabinogalactan proteins. This chain is Probable prolyl 4-hydroxylase 12, found in Arabidopsis thaliana (Mouse-ear cress).